The sequence spans 94 residues: Small ribosomal subunit protein uS17 (94 aa).

Belongs to the universal ribosomal protein uS17 family. In terms of assembly, part of the 30S ribosomal subunit.

Its function is as follows. One of the primary rRNA binding proteins, it binds specifically to the 5'-end of 16S ribosomal RNA. The protein is Small ribosomal subunit protein uS17 of Symbiobacterium thermophilum (strain DSM 24528 / JCM 14929 / IAM 14863 / T).